A 307-amino-acid chain; its full sequence is Atrochrysone carboxyl ACP thioesterase (307 aa).

Residues His104, His106, Asp108, and His109 each contribute to the Zn(2+) site. Asp108 (proton donor/acceptor) is an active-site residue.

Belongs to the metallo-beta-lactamase superfamily. Zn(2+) serves as cofactor.

The enzyme catalyses atrochrysone carboxyl-[ACP] + H2O = atrochrysone carboxylate + holo-[ACP] + H(+). Its pathway is secondary metabolite biosynthesis. Atrochrysone carboxyl ACP thioesterase; part of the gene cluster that mediates the biosynthesis of monodictyphenone, a prenyl xanthone derivative. The pathway begins with the synthesis of atrochrysone thioester by the polyketide synthase (PKS) mdpG. The atrochrysone carboxyl ACP thioesterase mdpF then breaks the thioester bond and releases the atrochrysone carboxylic acid from mdpG. The atrochrysone carboxylic acid is then converted to atrochrysone which is further transformed into emodin anthrone. The next step is performed by the anthrone oxygenase mdpH that catalyzes the oxidation of emodinanthrone to emodin. Emodin is further modified to yield monodictyphenone via several steps involving mdpB, mdpC mdpJ, mdpK and mdpL. The short chain dehydrogenase mdpC converts the tautomers of emodin hydroquinone into the 3-hydroxy-3,4-dihydroan-thracen-1(2H)-one derivative. These enzymes with xptA, xptB and xptC are also proposed to be involved in the synthesis of shamixanthone from emodin. Especially, direct reduction of emodin by the short chain dehydrogenase mdpC followed by dehydration catalyzed by the scytalone dehydratase-like protein mdpB gives loss of oxygen and formation of chrysophanol intermediate in two simple steps. The protein is Atrochrysone carboxyl ACP thioesterase of Emericella nidulans (strain FGSC A4 / ATCC 38163 / CBS 112.46 / NRRL 194 / M139) (Aspergillus nidulans).